A 278-amino-acid chain; its full sequence is Undecaprenyl-diphosphatase 1 (278 aa).

Transmembrane regions (helical) follow at residues Leu85 to Ile105, Ala108 to Trp128, Val188 to Glu208, Val218 to Cys238, and Phe254 to Leu274.

The protein belongs to the UppP family.

Its subcellular location is the cell inner membrane. The catalysed reaction is di-trans,octa-cis-undecaprenyl diphosphate + H2O = di-trans,octa-cis-undecaprenyl phosphate + phosphate + H(+). In terms of biological role, catalyzes the dephosphorylation of undecaprenyl diphosphate (UPP). Confers resistance to bacitracin. The chain is Undecaprenyl-diphosphatase 1 from Paraburkholderia xenovorans (strain LB400).